Consider the following 247-residue polypeptide: Adenosylcobinamide-GDP ribazoletransferase (247 aa).

6 helical membrane-spanning segments follow: residues 31–51, 55–75, 109–129, 135–155, 183–203, and 227–247; these read ILFY…VTCI, LPAL…TGGL, IGVL…YVLI, LFLI…FLTT, VLLL…SFLI, and AIEI…FYLV.

The protein belongs to the CobS family. It depends on Mg(2+) as a cofactor.

It is found in the cell inner membrane. The catalysed reaction is alpha-ribazole + adenosylcob(III)inamide-GDP = adenosylcob(III)alamin + GMP + H(+). It catalyses the reaction alpha-ribazole 5'-phosphate + adenosylcob(III)inamide-GDP = adenosylcob(III)alamin 5'-phosphate + GMP + H(+). It participates in cofactor biosynthesis; adenosylcobalamin biosynthesis; adenosylcobalamin from cob(II)yrinate a,c-diamide: step 7/7. Joins adenosylcobinamide-GDP and alpha-ribazole to generate adenosylcobalamin (Ado-cobalamin). Also synthesizes adenosylcobalamin 5'-phosphate from adenosylcobinamide-GDP and alpha-ribazole 5'-phosphate. This Acinetobacter baumannii (strain ACICU) protein is Adenosylcobinamide-GDP ribazoletransferase.